The sequence spans 96 residues: MKTMPQIAIESNERLSLRVSTDAKKLIVRAAAIQQTNLTDFVVSNILPVAQKIVDAAERVYLTERDTKMIMEILDNPPAPNEKLLAAAFALPDMKK.

A neutralization domain region spans residues Tyr-61–Lys-96.

The protein belongs to the TacA antitoxin family. Forms a complex with cognate toxin TacT3. Forms a 4:2 antitoxin:toxin complex with cognate toxin TacT3. Forms a 4:4 antitoxin:toxin complex with promoter DNA, where 2 TacT3 dimers bridge 2 TacA3 dimers. Only TacA3 contacts promoter DNA.

In terms of biological role, antitoxin component of a type II toxin-antitoxin (TA) system. Counteracts the toxic effect of cognate toxin TacT3, but not TacT1 or TacT2. Plays a role in persister cell formation. Its function is as follows. The TacA3-TacT3 complex both represses and derepresses expression of its own operon. The hexameric 4:2 TacA3-TacT3 complex binds promoter DNA and represses its transcription; both subunits are required. The octomeric 4:4 TacA3-TacT3 complex derepresses the operon. The shift from hexameric to octomeric complex probably alters DNA-binding, leading to dissociation from the operator DNA and derepression. Does not bind the promoter of the TacA1-TacT1 operon. The chain is Antitoxin TacA3 from Salmonella typhimurium (strain 14028s / SGSC 2262).